We begin with the raw amino-acid sequence, 65 residues long: Chymotrypsin/elastase isoinhibitors 2 to 5 (65 aa).

Intrachain disulfides connect Cys4-Cys37, Cys13-Cys32, Cys16-Cys28, Cys20-Cys59, and Cys39-Cys53. The 56-residue stretch at 4 to 59 (CGKNEVWTECTGCELKCGQDEKTPCALMCRPPSCECTPGRGMRRTHDGKCVPVSEC) folds into the TIL domain.

Belongs to the serine protease inhibitor-like (TIL domain-containing) family.

It is found in the secreted. Functionally, defends the organism against the host's proteinases. The protein is Chymotrypsin/elastase isoinhibitors 2 to 5 of Ascaris suum (Pig roundworm).